Reading from the N-terminus, the 338-residue chain is Heat-inducible transcription repressor HrcA (338 aa).

The protein belongs to the HrcA family.

Functionally, negative regulator of class I heat shock genes (grpE-dnaK-dnaJ and groELS operons). Prevents heat-shock induction of these operons. The polypeptide is Heat-inducible transcription repressor HrcA (Bacillus mycoides (strain KBAB4) (Bacillus weihenstephanensis)).